A 24-amino-acid chain; its full sequence is Lectin (24 aa).

The protein belongs to the leguminous lectin family. In terms of assembly, homotetramer.

Agglutinates erythrocytes of blood group A. Binds in decreasing order of affinity: N-acetyl-D-galactosamine, D-galactose, and D-galactosamine. The protein is Lectin of Crotalaria pallida (Smooth rattlebox).